Consider the following 563-residue polypeptide: NAD-dependent malic enzyme (563 aa).

Residue Tyr-101 is the Proton donor of the active site. Position 154 (Arg-154) interacts with NAD(+). Lys-172 serves as the catalytic Proton acceptor. Positions 243, 244, and 267 each coordinate a divalent metal cation. Residues Asp-267 and Asn-416 each coordinate NAD(+).

The protein belongs to the malic enzymes family. Homotetramer. Mg(2+) serves as cofactor. It depends on Mn(2+) as a cofactor.

The catalysed reaction is (S)-malate + NAD(+) = pyruvate + CO2 + NADH. It carries out the reaction oxaloacetate + H(+) = pyruvate + CO2. The polypeptide is NAD-dependent malic enzyme (Pseudomonas savastanoi pv. phaseolicola (strain 1448A / Race 6) (Pseudomonas syringae pv. phaseolicola (strain 1448A / Race 6))).